The chain runs to 450 residues: UDP-N-acetylmuramoylalanine--D-glutamate ligase (450 aa).

ATP is bound at residue 119–125 (GSNGKTT).

It belongs to the MurCDEF family.

It localises to the cytoplasm. The enzyme catalyses UDP-N-acetyl-alpha-D-muramoyl-L-alanine + D-glutamate + ATP = UDP-N-acetyl-alpha-D-muramoyl-L-alanyl-D-glutamate + ADP + phosphate + H(+). The protein operates within cell wall biogenesis; peptidoglycan biosynthesis. In terms of biological role, cell wall formation. Catalyzes the addition of glutamate to the nucleotide precursor UDP-N-acetylmuramoyl-L-alanine (UMA). The chain is UDP-N-acetylmuramoylalanine--D-glutamate ligase from Streptococcus pneumoniae (strain Taiwan19F-14).